Here is a 298-residue protein sequence, read N- to C-terminus: MQLEKMITEGSNTASAEIDRVSTLEMCRIINDEDKTVPPAVDRVLPDIAAAIDVIHAQVSGGGRLIYLGAGTSGRLGILDASECPPTYGVKPGLVVGLIAGGEYAIQHAVEGAEDSREGGVNDLKNINLTAQDVVVGIAASGRTPYVIAGLEYARQLGCRTVGISCNPGSAVSTTAEFAITPIVGAEVVTGSSRMKAGTAQKLVLNMLSTGLMIKSGKVFGNLMVDVVATNEKLHVRQVNIVKNATGCNAEQAEAALIACERNCKTAIVMVLKNLDAAEAKKRLDQHGGFIRQVLDKE.

Residues 55–218 (IHAQVSGGGR…STGLMIKSGK (164 aa)) form the SIS domain. Catalysis depends on E83, which acts as the Proton donor. E114 is an active-site residue.

The protein belongs to the GCKR-like family. MurNAc-6-P etherase subfamily. In terms of assembly, homodimer.

The catalysed reaction is N-acetyl-D-muramate 6-phosphate + H2O = N-acetyl-D-glucosamine 6-phosphate + (R)-lactate. Its pathway is amino-sugar metabolism; 1,6-anhydro-N-acetylmuramate degradation. The protein operates within amino-sugar metabolism; N-acetylmuramate degradation. It participates in cell wall biogenesis; peptidoglycan recycling. In terms of biological role, specifically catalyzes the cleavage of the D-lactyl ether substituent of MurNAc 6-phosphate, producing GlcNAc 6-phosphate and D-lactate. Together with AnmK, is also required for the utilization of anhydro-N-acetylmuramic acid (anhMurNAc) either imported from the medium or derived from its own cell wall murein, and thus plays a role in cell wall recycling. This Shigella flexneri protein is N-acetylmuramic acid 6-phosphate etherase.